The sequence spans 420 residues: Gamma-glutamyl phosphate reductase (420 aa).

The protein belongs to the gamma-glutamyl phosphate reductase family.

It is found in the cytoplasm. The catalysed reaction is L-glutamate 5-semialdehyde + phosphate + NADP(+) = L-glutamyl 5-phosphate + NADPH + H(+). The protein operates within amino-acid biosynthesis; L-proline biosynthesis; L-glutamate 5-semialdehyde from L-glutamate: step 2/2. Catalyzes the NADPH-dependent reduction of L-glutamate 5-phosphate into L-glutamate 5-semialdehyde and phosphate. The product spontaneously undergoes cyclization to form 1-pyrroline-5-carboxylate. The sequence is that of Gamma-glutamyl phosphate reductase from Oenococcus oeni (strain ATCC BAA-331 / PSU-1).